The primary structure comprises 87 residues: Probable Fe(2+)-trafficking protein (87 aa).

This sequence belongs to the Fe(2+)-trafficking protein family. In terms of assembly, monomer.

Functionally, could be a mediator in iron transactions between iron acquisition and iron-requiring processes, such as synthesis and/or repair of Fe-S clusters in biosynthetic enzymes. The sequence is that of Probable Fe(2+)-trafficking protein from Buchnera aphidicola subsp. Baizongia pistaciae (strain Bp).